Consider the following 140-residue polypeptide: Small ribosomal subunit protein uS12 (140 aa).

A disordered region spans residues 1-28; sequence MPTINQLVRKSRKALEKKSTAPALQKGY. A 3-methylthioaspartic acid modification is found at D102. Residues 119-140 are disordered; it reads GVDKRRQSRSKYGAKRPKEAKK. The span at 124–140 shows a compositional bias: basic residues; the sequence is RQSRSKYGAKRPKEAKK.

It belongs to the universal ribosomal protein uS12 family. Part of the 30S ribosomal subunit. Contacts proteins S8 and S17. May interact with IF1 in the 30S initiation complex.

With S4 and S5 plays an important role in translational accuracy. Its function is as follows. Interacts with and stabilizes bases of the 16S rRNA that are involved in tRNA selection in the A site and with the mRNA backbone. Located at the interface of the 30S and 50S subunits, it traverses the body of the 30S subunit contacting proteins on the other side and probably holding the rRNA structure together. The combined cluster of proteins S8, S12 and S17 appears to hold together the shoulder and platform of the 30S subunit. The polypeptide is Small ribosomal subunit protein uS12 (Clostridioides difficile (strain 630) (Peptoclostridium difficile)).